The chain runs to 542 residues: CTP synthase (542 aa).

Positions 1–265 (MARYVFITGG…DSEVLSAFGI (265 aa)) are amidoligase domain. A CTP-binding site is contributed by serine 13. Serine 13 contributes to the UTP binding site. 14–19 (SLGKGI) contacts ATP. Tyrosine 54 contributes to the L-glutamine binding site. Aspartate 71 contributes to the ATP binding site. The Mg(2+) site is built by aspartate 71 and glutamate 139. CTP-binding positions include 146 to 148 (DIE), 186 to 191 (KTKPTQ), and lysine 222. UTP-binding positions include 186–191 (KTKPTQ) and lysine 222. The 251-residue stretch at 291–541 (TIAIVGKYTG…IEAAIEQSRL (251 aa)) folds into the Glutamine amidotransferase type-1 domain. Glycine 353 provides a ligand contact to L-glutamine. Cysteine 380 (nucleophile; for glutamine hydrolysis) is an active-site residue. L-glutamine is bound by residues 381–384 (FGMQ), glutamate 404, and arginine 469. Residues histidine 514 and glutamate 516 contribute to the active site.

It belongs to the CTP synthase family. As to quaternary structure, homotetramer.

It catalyses the reaction UTP + L-glutamine + ATP + H2O = CTP + L-glutamate + ADP + phosphate + 2 H(+). The catalysed reaction is L-glutamine + H2O = L-glutamate + NH4(+). The enzyme catalyses UTP + NH4(+) + ATP = CTP + ADP + phosphate + 2 H(+). Its pathway is pyrimidine metabolism; CTP biosynthesis via de novo pathway; CTP from UDP: step 2/2. Allosterically activated by GTP, when glutamine is the substrate; GTP has no effect on the reaction when ammonia is the substrate. The allosteric effector GTP functions by stabilizing the protein conformation that binds the tetrahedral intermediate(s) formed during glutamine hydrolysis. Inhibited by the product CTP, via allosteric rather than competitive inhibition. In terms of biological role, catalyzes the ATP-dependent amination of UTP to CTP with either L-glutamine or ammonia as the source of nitrogen. Regulates intracellular CTP levels through interactions with the four ribonucleotide triphosphates. In Brucella anthropi (strain ATCC 49188 / DSM 6882 / CCUG 24695 / JCM 21032 / LMG 3331 / NBRC 15819 / NCTC 12168 / Alc 37) (Ochrobactrum anthropi), this protein is CTP synthase.